The chain runs to 684 residues: G-protein-signaling modulator 2 (684 aa).

Positions 22 to 357 are important for interaction with NUMA1; INSC and FRMPD1; that stretch reads ASCLELALEG…HLEISREVGD (336 aa). TPR repeat units lie at residues 24–57, 62–95, 102–135, 142–184, 202–235, 242–275, 282–315, and 322–355; these read CLEL…GTED, SAIY…ARTI, AKAS…SREL, ARAL…AVDF, GRAF…AKEF, RRAY…ARQL, AQSC…AQEL, and GRAC…SREV. At Ser-132 the chain carries Phosphoserine; by PKG. At Ser-352 the chain carries Phosphoserine; by PKG. A phosphoserine mark is found at Ser-408 and Ser-483. At Thr-486 the chain carries Phosphothreonine. A GoLoco 1 domain is found at 489–511; it reads DEGFFDLLSRFQSNRMDDQRCCL. The residue at position 501 (Ser-501) is a Phosphoserine; by PKC. Phosphoserine is present on residues Ser-541 and Ser-565. 3 consecutive GoLoco domains span residues 544–566, 594–616, and 628–650; these read TDEF…RASF, DEDF…RCAP, and DEDF…RVLL. Ser-607 bears the Phosphoserine; by PKG mark. GDP is bound by residues Arg-608, Arg-613, Arg-642, and Arg-647.

Belongs to the GPSM family. In terms of assembly, interacts with the dynein-dynactin complex; this interaction is inhibited in a PLK1-dependent manner. Part of a spindle orientation complex at least composed of GNAI1, GPSM2 and NUMA1. Interacts with LLGL2. Interacts (via TPR repeat region) with INSC/inscuteable. Interacts (via TPR repeat region) with NUMA1 (via C-terminus); this interaction is direct, inhibited in a PLK1-dependent manner, prevents the binding of NUMA1 with SPAG5 and promotes spindle pole organization. INSC and NUMA1 compete for the same binding site, but INSC has higher affinity and can displace NUMA1 (in vitro). Interacts with GNAI2. Interacts (via GoLoco domains) with the GDP-bound form of GNAI1 and GNAI3; has much lower affinity for the GTP-bound form. Interaction with GDP-bound GNAI3 strongly enhances the affinity for NUMA1. Interacts (via TPR repeat region) with FRMPD1. INSC and FRMPD1 compete for the same binding site, but INSC has higher affinity and can displace FRMPD1 (in vitro). Interacts (via TPR repeat region) with FRMPD4. Identified in a complex with INSC and F2RL2/Par3. Interacts with TASOR. Ubiquitously expressed.

The protein localises to the cytoplasm. It localises to the cell cortex. Its subcellular location is the cytoskeleton. It is found in the spindle pole. The protein resides in the lateral cell membrane. Plays an important role in mitotic spindle pole organization via its interaction with NUMA1. Required for cortical dynein-dynactin complex recruitment during metaphase. Plays a role in metaphase spindle orientation. Also plays an important role in asymmetric cell divisions. Has guanine nucleotide dissociation inhibitor (GDI) activity towards G(i) alpha proteins, such as GNAI1 and GNAI3, and thereby regulates their activity. The sequence is that of G-protein-signaling modulator 2 (GPSM2) from Homo sapiens (Human).